The primary structure comprises 240 residues: Chloroplastic group IIB intron splicing facilitator CRS2-B, chloroplastic (240 aa).

It belongs to the PTH family. CRS2 subfamily. As to quaternary structure, part of large ribonucleo-protein complexes that include group IIB introns and either CAF1 or CAF2.

Its subcellular location is the plastid. The protein localises to the chloroplast stroma. Its function is as follows. Required for the splicing of group IIB introns in chloroplasts. The chain is Chloroplastic group IIB intron splicing facilitator CRS2-B, chloroplastic (CRS2B) from Arabidopsis thaliana (Mouse-ear cress).